The sequence spans 181 residues: Protein FAM237A (181 aa).

Positions Met-1–Cys-33 are cleaved as a signal peptide. A Leucine amide modification is found at Leu-113. Residues Gly-114 to Lys-181 constitute a propeptide, removed in the mature form.

The active form requires C-terminal amidation and disulfide bond formation. As to expression, expressed in the pituitary, testis, and heart and at lower levels in the brain.

The protein resides in the secreted. In terms of biological role, may be capable of activating GPR83 via the GNAQ signaling pathway. In Homo sapiens (Human), this protein is Protein FAM237A.